We begin with the raw amino-acid sequence, 263 residues long: uncharacterized protein (263 aa).

It to B.subtilis soj.

This is an uncharacterized protein from Pseudomonas putida (strain ATCC 47054 / DSM 6125 / CFBP 8728 / NCIMB 11950 / KT2440).